We begin with the raw amino-acid sequence, 114 residues long: UPF0342 protein SSP0954 (114 aa).

Belongs to the UPF0342 family.

The polypeptide is UPF0342 protein SSP0954 (Staphylococcus saprophyticus subsp. saprophyticus (strain ATCC 15305 / DSM 20229 / NCIMB 8711 / NCTC 7292 / S-41)).